The chain runs to 354 residues: MADEFGDGDTVELPVGKEAVDALIRENSHIFSDTQCKVCSAVLISESQKLAHYQSRKHANKVRRYMSIHQGEEFVSAKKFKAAPAESSDGDDRSKCCPICNMTFSSPVVAESHYSGKTHIKNLRLREQGGVTEGMLHQAKKLVVTRTPTIATKIDNRMDQSDPTKFCKLCHATFNNPLMAEQHYAGKKHKKQETKTQLMTIYTSSGHTPAQAPIAINVNSPLPGSGSAGKGFSCDTCNIVLNSIEQYQAHVSGAKHKNQLMSMTPLSKEGPPAAGGPSALAGPPSTGGALSSGGPSARGFSASGGPTPKGPSSFGGLPPMGGLMPPPYPPPHSQPYVREDMMGPDGYTYFNKDF.

4 Matrin-type zinc fingers span residues 34–64, 95–125, 165–195, and 232–262; these read TQCKVCSAVLISESQKLAHYQSRKHANKVRR, KCCPICNMTFSSPVVAESHYSGKTHIKNLRL, KFCKLCHATFNNPLMAEQHYAGKKHKKQETK, and FSCDTCNIVLNSIEQYQAHVSGAKHKNQLMS. Zn(2+)-binding residues include cysteine 36, cysteine 39, histidine 52, histidine 58, cysteine 97, cysteine 100, histidine 113, and histidine 119. Positions 263–343 are disordered; sequence MTPLSKEGPP…QPYVREDMMG (81 aa). 2 stretches are compositionally biased toward low complexity: residues 270 to 289 and 310 to 323; these read GPPAAGGPSALAGPPSTGGA and GPSSFGGLPPMGGL. The segment covering 324-333 has biased composition (pro residues); it reads MPPPYPPPHS.

It is found in the nucleus. The protein localises to the cytoplasm. Functionally, binds preferentially to dsRNA, but also to RNA-DNA hybrids. The sequence is that of Zinc finger protein 346 from Xenopus tropicalis (Western clawed frog).